Here is a 359-residue protein sequence, read N- to C-terminus: Peptide chain release factor 1 (359 aa).

Gln-236 carries the N5-methylglutamine modification. Positions 288-308 (QDEQDAERKSTIGTGDRSERI) are disordered. Over residues 293–308 (AERKSTIGTGDRSERI) the composition is skewed to basic and acidic residues.

This sequence belongs to the prokaryotic/mitochondrial release factor family. Post-translationally, methylated by PrmC. Methylation increases the termination efficiency of RF1.

It localises to the cytoplasm. Its function is as follows. Peptide chain release factor 1 directs the termination of translation in response to the peptide chain termination codons UAG and UAA. The sequence is that of Peptide chain release factor 1 from Streptococcus uberis (strain ATCC BAA-854 / 0140J).